The primary structure comprises 94 residues: Integration host factor subunit beta (94 aa).

Belongs to the bacterial histone-like protein family. Heterodimer of an alpha and a beta chain.

Functionally, this protein is one of the two subunits of integration host factor, a specific DNA-binding protein that functions in genetic recombination as well as in transcriptional and translational control. This is Integration host factor subunit beta from Yersinia enterocolitica serotype O:8 / biotype 1B (strain NCTC 13174 / 8081).